Reading from the N-terminus, the 128-residue chain is Large ribosomal subunit protein bL12 (128 aa).

The protein belongs to the bacterial ribosomal protein bL12 family. In terms of assembly, homodimer. Part of the ribosomal stalk of the 50S ribosomal subunit. Forms a multimeric L10(L12)X complex, where L10 forms an elongated spine to which 2 to 4 L12 dimers bind in a sequential fashion. Binds GTP-bound translation factors.

Its function is as follows. Forms part of the ribosomal stalk which helps the ribosome interact with GTP-bound translation factors. Is thus essential for accurate translation. This chain is Large ribosomal subunit protein bL12, found in Corynebacterium aurimucosum (strain ATCC 700975 / DSM 44827 / CIP 107346 / CN-1) (Corynebacterium nigricans).